We begin with the raw amino-acid sequence, 235 residues long: Small ribosomal subunit protein uS3 (235 aa).

Positions 39–107 (IRQYVFKALP…DVSLNIVEIR (69 aa)) constitute a KH type-2 domain.

It belongs to the universal ribosomal protein uS3 family. In terms of assembly, part of the 30S ribosomal subunit. Forms a tight complex with proteins S10 and S14.

Its function is as follows. Binds the lower part of the 30S subunit head. Binds mRNA in the 70S ribosome, positioning it for translation. The chain is Small ribosomal subunit protein uS3 from Sphingopyxis alaskensis (strain DSM 13593 / LMG 18877 / RB2256) (Sphingomonas alaskensis).